The primary structure comprises 598 residues: Beta-myrcene/(E)-beta-ocimene synthase 2, chloroplastic (598 aa).

A chloroplast-targeting transit peptide spans 1 to 30 (MATLCIGSAPIYQNACIHNFRLQRPRRFIS). Arginine 307, aspartate 344, aspartate 348, arginine 486, and asparagine 489 together coordinate (2E)-geranyl diphosphate. Mg(2+) contacts are provided by aspartate 344 and aspartate 348. The DDXXD motif motif lies at 344–348 (DDIYD). Residues asparagine 489, threonine 493, and glutamate 497 each contribute to the Mg(2+) site.

It belongs to the terpene synthase family. Tpsb subfamily. Mg(2+) is required as a cofactor. The cofactor is Mn(2+). As to expression, expressed exclusively in mature flowers, but not in inmmature buds.

The protein resides in the plastid. Its subcellular location is the chloroplast. It catalyses the reaction (2E)-geranyl diphosphate = beta-myrcene + diphosphate. Its pathway is secondary metabolite biosynthesis; terpenoid biosynthesis. Functionally, involved in monoterpene (C10) biosynthesis. The major products are alpha- and beta-pinene, sabinene, beta-myrcene, (E)-beta-ocimene and limonene. In Arabidopsis thaliana (Mouse-ear cress), this protein is Beta-myrcene/(E)-beta-ocimene synthase 2, chloroplastic (TPS24).